We begin with the raw amino-acid sequence, 366 residues long: MGKTDKVVVGLSGGVDSAVAAMRLLEAGHHVEGLFMKNWEDDDTLTHCAAEEDLAEAQAVADHLGIRLHRANFAARYREQVFEVCLREYRAGRTPNPDILCNQRIKFRAFLDHALSLGASKVATGHYAGVGEQGGRFTLLRGEDPHKDQSYFLYTLGQAQLRHSLFPLSELPKPEVRRQAAAAGLPNHARRDSTGICFIGERDFRAFLSRYIQRSPGPMETPEGQVVGEHQGLAFYTLGQRRGLGLGGLPDHDEGAWYVADKDMARNALIVVQGHAHPRLLSTALVADELSWVAGAPPTLPLRCTVKSRYRQQDQPCALEAGPSPTSVVVRFDTPQRAVTPGQSVVFYQGRVCLGGGIIQTRTPVE.

Residues 10–17 and Met-36 contribute to the ATP site; that span reads GLSGGVDS. Residues 96–98 are interaction with target base in tRNA; sequence NPD. Cys-101 serves as the catalytic Nucleophile. Cys-101 and Cys-197 form a disulfide bridge. Gly-125 is an ATP binding site. Residues 147–149 form an interaction with tRNA region; that stretch reads KDQ. Cys-197 serves as the catalytic Cysteine persulfide intermediate. The interaction with tRNA stretch occupies residues 309–310; sequence RY.

It belongs to the MnmA/TRMU family.

It localises to the cytoplasm. The enzyme catalyses S-sulfanyl-L-cysteinyl-[protein] + uridine(34) in tRNA + AH2 + ATP = 2-thiouridine(34) in tRNA + L-cysteinyl-[protein] + A + AMP + diphosphate + H(+). Catalyzes the 2-thiolation of uridine at the wobble position (U34) of tRNA, leading to the formation of s(2)U34. This is tRNA-specific 2-thiouridylase MnmA from Alkalilimnicola ehrlichii (strain ATCC BAA-1101 / DSM 17681 / MLHE-1).